Reading from the N-terminus, the 204-residue chain is Ribosome maturation factor RimP (204 aa).

Residues glycine 176–histidine 204 are disordered. Residues serine 181–glutamate 198 show a composition bias toward acidic residues.

The protein belongs to the RimP family.

The protein resides in the cytoplasm. Functionally, required for maturation of 30S ribosomal subunits. The chain is Ribosome maturation factor RimP from Cereibacter sphaeroides (strain ATCC 17029 / ATH 2.4.9) (Rhodobacter sphaeroides).